The chain runs to 718 residues: Tegument protein UL46 (718 aa).

Disordered stretches follow at residues 433 to 510 (SAGP…EPPA) and 581 to 611 (TADD…DDES). The span at 444 to 454 (GPGGHRAGGGT) shows a compositional bias: gly residues. Positions 455–467 (CREKIQRARRDNE) are enriched in basic and acidic residues.

The protein belongs to the herpesviridae HHV-1 VP11/12 protein family. In terms of assembly, interacts with VP16. Interacts with host LCK, PIK3R1, SHC1 AND GRB2; these interactions promote the activation of the PI3K/AKT pathway. Interacts with host YWHAB. Interacts with ICP0; this interaction targets UL46 for degradation by the proteasome. Interacts (via N-terminus) with host TMEM173. Interacts (via C-terminus) with host TBK1. Interacts with host DOK2. Phosphorylated by host LCK. The phosphorylation seems to be lymphocyte-specific.

It is found in the virion tegument. It localises to the host cytoplasm. The protein localises to the host cell membrane. In terms of biological role, plays a role in the activation of the host PI3K/AKT pathway to promote cell survival. Interacts with and activates host LCK and thereby recruits downstream partners SHC1, GRB2 and PI3KR1 in order to activate the PI3K pathway by phosphorylating host AKT on its activating residues. This mechanism is inhibited by the viral protein US3 that instead promotes incorporation of UL46 into virions. Plays a role in the inhibition of TMEM173/STING-mediated type I interferon production. Interacts with host DOK2 and induces its degradation. This immune evasion mechanism to inactivate T-cells may play an important role during pathogenesis. The chain is Tegument protein UL46 from Homo sapiens (Human).